Consider the following 409-residue polypeptide: Glycosaminoglycan xylosylkinase (409 aa).

At 1 to 6 (MKLKQR) the chain is on the cytoplasmic side. Residues 7–25 (VVVLCAVLFLLGLAKVFLL) traverse the membrane as a helical; Signal-anchor for type II membrane protein segment. The Lumenal portion of the chain corresponds to 26–409 (DGGEGSAASR…IEDRMNLPHP (384 aa)). Q107 and K123 together coordinate ATP. A Mn(2+)-binding site is contributed by D142. N193 carries an N-linked (GlcNAc...) asparagine glycan. Disulfide bonds link C196–C211 and C201–C204. 222-225 (TLWL) contributes to the ATP binding site. Disulfide bonds link C257/C331 and C332/C389. D289 is an active-site residue. 2 residues coordinate ATP: E294 and D309. D309 contacts Mn(2+).

It belongs to the FAM20 family. It depends on Mn(2+) as a cofactor.

Its subcellular location is the golgi apparatus membrane. It catalyses the reaction 3-O-(beta-D-galactosyl-(1-&gt;3)-beta-D-galactosyl-(1-&gt;4)-beta-D-xylosyl)-L-seryl-[protein] + ATP = 3-O-(beta-D-galactosyl-(1-&gt;3)-beta-D-galactosyl-(1-&gt;4)-beta-D-2-O-phosphoxylosyl)-L-seryl-[protein] + ADP + H(+). Responsible for the 2-O-phosphorylation of xylose in the glycosaminoglycan-protein linkage region of proteoglycans thereby regulating the amount of mature GAG chains. Sulfated glycosaminoglycans (GAGs), including heparan sulfate and chondroitin sulfate, are synthesized on the so-called common GAG-protein linkage region (GlcUAbeta1-3Galbeta1-3Galbeta1-4Xylbeta1-O-Ser) of core proteins, which is formed by the stepwise addition of monosaccharide residues by the respective specific glycosyltransferases. The chain is Glycosaminoglycan xylosylkinase from Danio rerio (Zebrafish).